Here is a 280-residue protein sequence, read N- to C-terminus: MNKQQLFENIKKKQSFLCVGLDTDIKKIPQHLLSEEDPIFAFNKAIIDATADYCVAYKPNLAFYESLGTKGMMAFEKTVAYLRENYPDQFIIADAKRGDIGNTSEMYARSFFDHIKVDAVTVAPYMGEDSVKPFLIYPEAWVILLALTSNKGSHDFQMTEDANGERLFEKVLKKSQEWANDEQMMYVVGATQGKMFLDIRKQAPNHFLLVPGVGAQGGSLAEVAQYGMNDQCGLLVNSSRAIIYADKTEAFANVAREAAHAVQKEMAGYLHDKGIIPCKA.

K96 serves as the catalytic Proton donor.

This sequence belongs to the OMP decarboxylase family. Type 2 subfamily.

The enzyme catalyses orotidine 5'-phosphate + H(+) = UMP + CO2. It functions in the pathway pyrimidine metabolism; UMP biosynthesis via de novo pathway; UMP from orotate: step 2/2. This Parabacteroides distasonis (strain ATCC 8503 / DSM 20701 / CIP 104284 / JCM 5825 / NCTC 11152) protein is Orotidine 5'-phosphate decarboxylase.